Consider the following 613-residue polypeptide: Pentatricopeptide repeat-containing protein At2g02750 (613 aa).

15 PPR repeats span residues 30 to 64, 65 to 99, 101 to 126, 128 to 162, 163 to 193, 194 to 228, 230 to 264, 265 to 295, 297 to 331, 332 to 366, 367 to 401, 402 to 432, 435 to 469, 470 to 500, and 506 to 539; these read NKFT…GFFV, DVFT…GIAS, NAAV…ARVS, SGMN…GFEM, EVYV…VPHK, SVVT…SSEE, NDVT…EFQF, ETMV…LKDT, NLIS…GLKP, DSAT…VMVP, SLKC…AAER, DIFV…FEPK, DPVF…KVEP, SLAT…MQEE, and STEH…PSSS. The tract at residues 540–613 is type E motif; degenerate; the sequence is VYSSLLGSCR…VKLPGLSLSG (74 aa).

Belongs to the PPR family. PCMP-E subfamily.

This Arabidopsis thaliana (Mouse-ear cress) protein is Pentatricopeptide repeat-containing protein At2g02750 (PCMP-E22).